The following is a 407-amino-acid chain: Phosphopentomutase (407 aa).

6 residues coordinate Mn(2+): aspartate 10, aspartate 306, histidine 311, aspartate 347, histidine 348, and histidine 359.

This sequence belongs to the phosphopentomutase family. It depends on Mn(2+) as a cofactor.

Its subcellular location is the cytoplasm. The catalysed reaction is 2-deoxy-alpha-D-ribose 1-phosphate = 2-deoxy-D-ribose 5-phosphate. It catalyses the reaction alpha-D-ribose 1-phosphate = D-ribose 5-phosphate. It participates in carbohydrate degradation; 2-deoxy-D-ribose 1-phosphate degradation; D-glyceraldehyde 3-phosphate and acetaldehyde from 2-deoxy-alpha-D-ribose 1-phosphate: step 1/2. Functionally, isomerase that catalyzes the conversion of deoxy-ribose 1-phosphate (dRib-1-P) and ribose 1-phosphate (Rib-1-P) to deoxy-ribose 5-phosphate (dRib-5-P) and ribose 5-phosphate (Rib-5-P), respectively. The polypeptide is Phosphopentomutase (Buchnera aphidicola subsp. Acyrthosiphon pisum (strain Tuc7)).